The chain runs to 109 residues: Putative gametogenetin-binding protein 1 (109 aa).

The interaction with GGN stretch occupies residues 24–109 (KAFRSTDTVG…KGEMGNWPPE (86 aa)).

Interacts with CCDC159. Interacts with GGN.

It is found in the cytoplasm. The protein localises to the membrane. The protein resides in the golgi apparatus. Functionally, may be involved in spermatogenesis. The protein is Putative gametogenetin-binding protein 1 (GGNBP1) of Homo sapiens (Human).